We begin with the raw amino-acid sequence, 487 residues long: Virulence sensor histidine kinase PhoQ (487 aa).

Residues 1 to 16 lie on the Cytoplasmic side of the membrane; sequence MNKFARHFLPLSLRVR. A helical membrane pass occupies residues 17–37; it reads FLLATAGVVLVLSLAYGIVAL. Topologically, residues 38–193 are periplasmic; that stretch reads VGYSVSFDKT…ELKRSYMVWS (156 aa). 2 residues coordinate a divalent metal cation: D151 and D152. A helical transmembrane segment spans residues 194 to 214; the sequence is WFVYVLAANLLLVIPLLWIAA. Positions 215-266 constitute an HAMP domain; the sequence is WWSLRPIEALAREVRELEDHHREMLNPETTRELTSLVRNLNQLLKSERERYN. Over 215-487 the chain is Cytoplasmic; sequence WWSLRPIEAL…GRQHPTQKEE (273 aa). The Histidine kinase domain occupies 274-481; sequence DLTHSLKTPL…RMEVVFGRQH (208 aa). H277 carries the phosphohistidine; by autocatalysis modification. Residue N386 participates in Mg(2+) binding. ATP is bound by residues 386–394, 416–421, and 435–447; these read NVLDNACKY, DDGPGI, and RADT…GVGL. Q443 serves as a coordination point for Mg(2+).

In terms of assembly, homodimer.

The protein resides in the cell inner membrane. The enzyme catalyses ATP + protein L-histidine = ADP + protein N-phospho-L-histidine.. Member of the two-component regulatory system PhoP/PhoQ which regulates the expression of genes involved in virulence and resistance to host defense antimicrobial peptides. In low periplasmic Mg(2+), PhoQ functions as a membrane-associated protein kinase that undergoes autophosphorylation and subsequently transfers the phosphate to PhoP, which results in the expression of PhoP-activated genes (PAG) and repression of PhoP-repressed genes (PRG). In high periplasmic Mg(2+), acts as a protein phosphatase that dephosphorylates phospho-PhoP, which results in the repression of PAG and may lead to expression of some PRG. The sequence is that of Virulence sensor histidine kinase PhoQ (phoQ) from Salmonella paratyphi A (strain ATCC 9150 / SARB42).